The sequence spans 312 residues: DNA primase small subunit PriS (312 aa).

Active-site residues include Asp-88, Asp-90, and Asp-215.

Belongs to the eukaryotic-type primase small subunit family. As to quaternary structure, heterodimer of a small subunit (PriS) and a large subunit (PriL). The cofactor is Mg(2+). It depends on Mn(2+) as a cofactor.

Its function is as follows. Catalytic subunit of DNA primase, an RNA polymerase that catalyzes the synthesis of short RNA molecules used as primers for DNA polymerase during DNA replication. The small subunit contains the primase catalytic core and has DNA synthesis activity on its own. Binding to the large subunit stabilizes and modulates the activity, increasing the rate of DNA synthesis while decreasing the length of the DNA fragments, and conferring RNA synthesis capability. The DNA polymerase activity may enable DNA primase to also catalyze primer extension after primer synthesis. May also play a role in DNA repair. The protein is DNA primase small subunit PriS of Pyrobaculum islandicum (strain DSM 4184 / JCM 9189 / GEO3).